A 235-amino-acid polypeptide reads, in one-letter code: Large ribosomal subunit protein uL1 (235 aa).

It belongs to the universal ribosomal protein uL1 family. In terms of assembly, part of the 50S ribosomal subunit.

Its function is as follows. Binds directly to 23S rRNA. The L1 stalk is quite mobile in the ribosome, and is involved in E site tRNA release. Functionally, protein L1 is also a translational repressor protein, it controls the translation of the L11 operon by binding to its mRNA. The chain is Large ribosomal subunit protein uL1 from Synechococcus sp. (strain CC9311).